Consider the following 479-residue polypeptide: Glycogen synthase (479 aa).

Position 15 (Lys-15) interacts with ADP-alpha-D-glucose.

This sequence belongs to the glycosyltransferase 1 family. Bacterial/plant glycogen synthase subfamily.

It carries out the reaction [(1-&gt;4)-alpha-D-glucosyl](n) + ADP-alpha-D-glucose = [(1-&gt;4)-alpha-D-glucosyl](n+1) + ADP + H(+). It functions in the pathway glycan biosynthesis; glycogen biosynthesis. Synthesizes alpha-1,4-glucan chains using ADP-glucose. The sequence is that of Glycogen synthase from Roseobacter denitrificans (strain ATCC 33942 / OCh 114) (Erythrobacter sp. (strain OCh 114)).